Here is a 333-residue protein sequence, read N- to C-terminus: Small ribosomal subunit protein uS2 (333 aa).

It belongs to the universal ribosomal protein uS2 family.

In Azorhizobium caulinodans (strain ATCC 43989 / DSM 5975 / JCM 20966 / LMG 6465 / NBRC 14845 / NCIMB 13405 / ORS 571), this protein is Small ribosomal subunit protein uS2.